A 257-amino-acid polypeptide reads, in one-letter code: uncharacterized protein (257 aa).

6 helical membrane-spanning segments follow: residues 23 to 43, 79 to 99, 131 to 151, 158 to 178, 199 to 219, and 221 to 241; these read VLTD…EGLL, FIFI…VLGA, TFGI…AFSV, FAVS…ILMM, AFVL…HYEM, and HSVF…IHYI.

The protein belongs to the TerC family.

The protein localises to the cell membrane. This is an uncharacterized protein from Bacillus subtilis (strain 168).